The chain runs to 339 residues: Immunoglobulin-binding protein 1 (339 aa).

Position 2 is an N-acetylalanine (A2). Positions 46 to 60 constitute a UIM domain; that stretch reads LDLLEKAAEMLSQLD. Residues 98-202 are interaction with PPP2CA; it reads RLDHLQRARE…YLLHLQRWID (105 aa). 2 disordered regions span residues 221-243 and 289-339; these read RDSSREASTSNSSRQERPPVKPF and APEE…QNMG. The interaction with MID1 stretch occupies residues 225–290; sequence REASTSNSSR…PDQGIAKAAP (66 aa). At K241 the chain carries N6-acetyllysine. The span at 301–312 shows a compositional bias: acidic residues; that stretch reads EEQEEKEEEDDE. The segment covering 313-329 has biased composition (basic and acidic residues); sequence QTLHRAREWDDWKDTHP.

This sequence belongs to the IGBP1/TAP42 family. Interacts with partially folded PPP2CA, but not with the fully active protein. Interacts with PPP2CB, and with PP4 and PP6. Interacts with MID1 and MID2. Interacts with ubiquitin. Post-translationally, phosphorylated. In terms of processing, monoubiquitination by MID1 triggers calpain-mediated cleavage and switches IGBP1 activity from protective to destructive. In terms of tissue distribution, ubiquitously expressed with highest levels in heart, skeletal muscle and pancreas.

It is found in the cytoplasm. Its function is as follows. Associated to surface IgM-receptor; may be involved in signal transduction. Involved in regulation of the catalytic activity of the phosphatases PP2A, PP4 and PP6 by protecting their partially folded catalytic subunits from degradative polyubiquitination until they associate with regulatory subunits. The polypeptide is Immunoglobulin-binding protein 1 (IGBP1) (Homo sapiens (Human)).